Consider the following 95-residue polypeptide: Large ribosomal subunit protein uL23 (95 aa).

It belongs to the universal ribosomal protein uL23 family. Part of the 50S ribosomal subunit. Contacts protein L29, and trigger factor when it is bound to the ribosome.

One of the early assembly proteins it binds 23S rRNA. One of the proteins that surrounds the polypeptide exit tunnel on the outside of the ribosome. Forms the main docking site for trigger factor binding to the ribosome. This chain is Large ribosomal subunit protein uL23, found in Bacillus licheniformis (strain ATCC 14580 / DSM 13 / JCM 2505 / CCUG 7422 / NBRC 12200 / NCIMB 9375 / NCTC 10341 / NRRL NRS-1264 / Gibson 46).